Consider the following 100-residue polypeptide: Signal recognition particle 19 kDa protein (100 aa).

The protein belongs to the SRP19 family. As to quaternary structure, part of the signal recognition particle protein translocation system, which is composed of SRP and FtsY. Archaeal SRP consists of a 7S RNA molecule of 300 nucleotides and two protein subunits: SRP54 and SRP19.

Its subcellular location is the cytoplasm. Its function is as follows. Involved in targeting and insertion of nascent membrane proteins into the cytoplasmic membrane. Binds directly to 7S RNA and mediates binding of the 54 kDa subunit of the SRP. The sequence is that of Signal recognition particle 19 kDa protein from Caldivirga maquilingensis (strain ATCC 700844 / DSM 13496 / JCM 10307 / IC-167).